A 249-amino-acid polypeptide reads, in one-letter code: Indole-3-glycerol phosphate synthase (249 aa).

Belongs to the TrpC family.

It carries out the reaction 1-(2-carboxyphenylamino)-1-deoxy-D-ribulose 5-phosphate + H(+) = (1S,2R)-1-C-(indol-3-yl)glycerol 3-phosphate + CO2 + H2O. The protein operates within amino-acid biosynthesis; L-tryptophan biosynthesis; L-tryptophan from chorismate: step 4/5. The protein is Indole-3-glycerol phosphate synthase of Pyrobaculum arsenaticum (strain DSM 13514 / JCM 11321 / PZ6).